Here is a 364-residue protein sequence, read N- to C-terminus: Probable UDP-arabinopyranose mutase 1 (364 aa).

The DXD motif motif lies at 103–105; the sequence is DDD. The N-linked (Glc...) arginine glycan is linked to arginine 151.

Belongs to the RGP family. As to quaternary structure, homopentamer or homohexamer. The cofactor is Mn(2+). Mg(2+) is required as a cofactor. Post-translationally, reversibly glycosylated by UDP-glucose, UDP-xylose and UDP-galactose, but not UDP-mannose.

Its subcellular location is the secreted. The protein localises to the cell wall. The protein resides in the cell junction. It localises to the plasmodesma. It is found in the golgi apparatus. It carries out the reaction UDP-beta-L-arabinofuranose = UDP-beta-L-arabinopyranose. Its activity is regulated as follows. Inhibited by inhibitor protein (IP) which may be a form of sucrose synthase. In terms of biological role, probable UDP-L-arabinose mutase involved in the biosynthesis of cell wall non-cellulosic polysaccharides. Was initially shown to possess an autoglycosylating activity which is dependent on the presence of UDP-glucose and manganese. This Pisum sativum (Garden pea) protein is Probable UDP-arabinopyranose mutase 1.